The chain runs to 383 residues: tRNA pseudouridine synthase B (383 aa).

D53 functions as the Nucleophile in the catalytic mechanism.

This sequence belongs to the pseudouridine synthase TruB family. Type 1 subfamily.

The enzyme catalyses uridine(55) in tRNA = pseudouridine(55) in tRNA. Responsible for synthesis of pseudouridine from uracil-55 in the psi GC loop of transfer RNAs. This chain is tRNA pseudouridine synthase B, found in Tropheryma whipplei (strain TW08/27) (Whipple's bacillus).